The primary structure comprises 294 residues: Ribosomal protein L11 methyltransferase (294 aa).

S-adenosyl-L-methionine-binding residues include threonine 144, glycine 165, aspartate 187, and asparagine 229.

This sequence belongs to the methyltransferase superfamily. PrmA family.

It is found in the cytoplasm. The catalysed reaction is L-lysyl-[protein] + 3 S-adenosyl-L-methionine = N(6),N(6),N(6)-trimethyl-L-lysyl-[protein] + 3 S-adenosyl-L-homocysteine + 3 H(+). In terms of biological role, methylates ribosomal protein L11. The protein is Ribosomal protein L11 methyltransferase of Pseudomonas paraeruginosa (strain DSM 24068 / PA7) (Pseudomonas aeruginosa (strain PA7)).